We begin with the raw amino-acid sequence, 203 residues long: MDKKIADLLQELQSSSNVTSNQLENVDKSSIPLSKARKPSDFELNNSIEDAEKIKTYPAALRYIFALNSRHPEKLQKLRKMKAMQERQERNWSLERQRLVQHFESKTKLQEILKPLSSDPKLKQPSNCLNDQTNNDSAQTLDDNRALQEFDEQVVQLTNRMYKEQLAILADLKIPLFLSVNNDEELSEDQKRLLQLLQDLLGA.

The disordered stretch occupies residues 117–138 (SSDPKLKQPSNCLNDQTNNDSA). The span at 124–138 (QPSNCLNDQTNNDSA) shows a compositional bias: polar residues.

It is found in the cytoplasm. The protein localises to the nucleus. This is an uncharacterized protein from Schizosaccharomyces pombe (strain 972 / ATCC 24843) (Fission yeast).